The primary structure comprises 116 residues: MDKKTSRLRRATRARKKIQELGVNRLVVHRTPRHIYAQVINPEAQVLAAASTVEKAVKELLKSTGNVDAAKAVGKFVAERAIEKGVTSVAFDRSGFKYHGRVAALADAAREAGLKF.

It belongs to the universal ribosomal protein uL18 family. As to quaternary structure, part of the 50S ribosomal subunit; part of the 5S rRNA/L5/L18/L25 subcomplex. Contacts the 5S and 23S rRNAs.

Functionally, this is one of the proteins that bind and probably mediate the attachment of the 5S RNA into the large ribosomal subunit, where it forms part of the central protuberance. The polypeptide is Large ribosomal subunit protein uL18 (Shewanella baltica (strain OS223)).